The primary structure comprises 5206 residues: Multifunctional-autoprocessing repeats-in-toxin (5206 aa).

The first 19 residues, 1–19 (MGKPFWRSVEYFFTGNYSA), serve as a signal peptide directing secretion. RtxA repeat units follow at residues 101–118 (GAAG…GDVS), 121–138 (GAAA…GNVT), 141–157 (GAGG…QGNL), 161–184 (GAGA…GDVT), 187–204 (GAGA…GNIT), 207–224 (GAGA…GDIT), 255–272 (GVGG…GDIH), 275–291 (GGGA…GSSF), 584–601 (GAGG…GNVY), 604–620 (GGGI…FGNT), 624–641 (GGGA…GDLT), 644–658 (GAGL…SKQG), 741–753 (AGGA…VGDG), 759–771 (MLGG…HISG), 782–798 (ALGG…GNTL), 801–816 (MGGG…DGTT), 820–835 (MVGG…NGDT), 841–855 (GVGN…GQTL), 858–875 (MGAA…TSIA), 877–891 (MIGA…GEGN), 896–910 (MGGL…GNGD), 915–932 (MVAE…MSVA), 934–950 (MLAK…GTTL), 972–984 (MIGQ…KVGN), 991–1006 (MVGK…DGTS), 1031–1043 (GKAN…GDGL), 1067–1079 (AAAK…HVGD), 1087–1102 (AGKG…GTTV), 1110–1122 (GNVM…GTTI), 1125–1142 (AKGK…LGVN), 1145–1159 (WGQA…DGDR), 1163–1179 (AKGE…GKEV), 1184–1199 (GKAN…DDYT), 1201–1217 (AWGK…GRNV), 1220–1236 (AKGE…GDSF), 1242–1256 (KGNI…MQVT), 1258–1275 (AKGK…LSVT), 1296–1313 (AWGK…LNVA), and 1315–1332 (MKGK…LNIN). The segment covering 1606-1626 (SQQANAVSEHATQNQASQNAL) has biased composition (polar residues). 2 disordered regions span residues 1606-1682 (SQQA…ESEA) and 1738-1895 (IAAA…EQEA). Basic and acidic residues predominate over residues 1627 to 1646 (SDKERAEADRQRLEQEKQKQ). Residues 1652 to 1671 (GSQSQLESTDQQALGNNGQA) are compositionally biased toward polar residues. Residues 1778–1805 (AEAKADAETRKADAVAKSNDAKQAESDA) are compositionally biased toward basic and acidic residues. Positions 1825–1834 (NKANQAQNDA) are enriched in polar residues. A compositionally biased stretch (basic and acidic residues) spans 1835–1849 (KGTKQNEGDRPDREG). The span at 1870–1880 (SHITTDSQTNA) shows a compositional bias: polar residues. The segment at 2377-2461 (ELMSVTELLD…SLLNQVNSRL (85 aa)) is membrane localization region (MLD). The interval 2537-2901 (EYGQVVADTI…HQVTDVLDAL (365 aa)) is rho inactivation domain (RID). Residues 2998–3113 (VVLFLHGSGS…MPSMTKAITA (116 aa)) form an ABH effector region region. The 185-residue stretch at 4111-4295 (PTADGGESRF…AENNKVSLSW (185 aa)) folds into the Peptidase C80 domain. 1D-myo-inositol hexakisphosphate is bound by residues 4117 to 4119 (ESR), 4144 to 4145 (KH), and arginine 4175. The For cysteine protease activity role is filled by histidine 4181. Residue serine 4226 coordinates 1D-myo-inositol hexakisphosphate. The active-site Nucleophile; for cysteine protease activity is the cysteine 4230. 1D-myo-inositol hexakisphosphate is bound by residues 4259–4261 (SVR), 4272–4273 (RK), lysine 4285, and lysine 4290. Disordered stretches follow at residues 4333–4362 (GAIG…ANNK) and 4738–4779 (LKEK…ETPD). Residues 4750-4762 (SSVSVNGASVNSA) are compositionally biased toward low complexity.

Mg(2+) serves as cofactor.

The protein resides in the secreted. It is found in the host cytoplasm. Its subcellular location is the host cytosol. The protein localises to the host cell membrane. It carries out the reaction L-lysyl-/S-(2E,6E,10E)-geranylgeranyl-L-cysteinyl-[protein] + hexadecanoyl-CoA = N(6)-hexadecanoyl-L-lysyl-/S-(2E,6E,10E)-geranylgeranyl-L-cysteinyl-[protein] + CoA + H(+). The catalysed reaction is L-lysyl-/S-(2E,6E,10E)-geranylgeranyl-L-cysteinyl-[protein] + dodecanoyl-CoA = N(6)-dodecanoyl-L-lysyl-/S-(2E,6E,10E)-geranylgeranyl-L-cysteinyl-[protein] + CoA + H(+). It catalyses the reaction L-lysyl-/S-(2E,6E,10E)-geranylgeranyl-L-cysteinyl-[protein] + decanoyl-CoA = N(6)-decanoyl-L-lysyl-/S-(2E,6E,10E)-geranylgeranyl-L-cysteinyl-[protein] + CoA + H(+). Precursor of a multifunctional toxin that causes destruction of the actin cytoskeleton by covalent cross-linking of actin and inactivation of Rho GTPases when translocated into the host cytoplasm. Upon translocation into the host cell, undergoes autoprocessing in cis mediated by the peptidase C80 domain (also named CPD domain): the protease activity is activated upon binding inositol hexakisphosphate (InsP6) present at the host cell membrane and delivers the Cysteine protease domain-containing toxin F3 chain to the host cytosol. The Cysteine protease domain-containing toxin F3 chain will then further cleave and release effector toxin chains that cause disassembly of the actin cytoskeleton and enhance V.vulnificus colonization of the small intestine, possibly by facilitating evasion of phagocytic cells. In terms of biological role, following autocatalytic cleavage in cis, this chain mediates processing in trans to release other individual toxin chains to the host cytosol. Released effector toxin chains cause disassembly of the actin cytoskeleton and enhance V.vulnificus colonization of the small intestine, possibly by facilitating evasion of phagocytic cells. Functionally, actin-directed toxin that catalyzes the covalent cross-linking of host cytoplasmic monomeric actin. Mediates the cross-link between 'Lys-50' of one monomer and 'Glu-270' of another actin monomer, resulting in formation of highly toxic actin oligomers that cause cell rounding. The toxin can be highly efficient at very low concentrations by acting on formin homology family proteins: toxic actin oligomers bind with high affinity to formins and adversely affect both nucleation and elongation abilities of formins, causing their potent inhibition in both profilin-dependent and independent manners. Acts as an acid--amino-acid ligase that transfers the gamma-phosphoryl group of ATP to the 'Glu-270' actin residue, resulting in the formation of an activated acyl phosphate intermediate. This intermediate is further hydrolyzed and the energy of hydrolysis is utilized for the formation of the amide bond between actin subunits. Its function is as follows. N-epsilon-fatty acyltransferase that mediates lysine-palmitoylation of host Rho GTPase proteins, with a strong preference for host Rac1. After delivery to the host cytosol, localizes to the host cell membrane where it palmitoylates host Rho GTPase proteins, resulting in loss of all active GTP-bound Rho and subsequent actin depolymerization. Prenylation of host Rac1 at the C-terminus is required for lysine-palmitoylation. Indirectly activates the small GTPase CDC42. The sequence is that of Multifunctional-autoprocessing repeats-in-toxin from Vibrio vulnificus.